Here is a 356-residue protein sequence, read N- to C-terminus: Holliday junction branch migration complex subunit RuvB (356 aa).

Positions 4–190 (TDKLAAERII…FGIVARLEFY (187 aa)) are large ATPase domain (RuvB-L). ATP-binding positions include Leu29, Arg30, Gly71, Lys74, Thr75, Thr76, 137–139 (EDY), Arg180, Tyr190, and Arg227. Thr75 provides a ligand contact to Mg(2+). Positions 191–261 (DAEQLSRIVR…VADAALAMLD (71 aa)) are small ATPAse domain (RuvB-S). A head domain (RuvB-H) region spans residues 264–356 (PVGFDLMDRK…NLWDTPDAER (93 aa)). DNA contacts are provided by Arg300, Arg319, and Arg324.

This sequence belongs to the RuvB family. In terms of assembly, homohexamer. Forms an RuvA(8)-RuvB(12)-Holliday junction (HJ) complex. HJ DNA is sandwiched between 2 RuvA tetramers; dsDNA enters through RuvA and exits via RuvB. An RuvB hexamer assembles on each DNA strand where it exits the tetramer. Each RuvB hexamer is contacted by two RuvA subunits (via domain III) on 2 adjacent RuvB subunits; this complex drives branch migration. In the full resolvosome a probable DNA-RuvA(4)-RuvB(12)-RuvC(2) complex forms which resolves the HJ.

The protein resides in the cytoplasm. The enzyme catalyses ATP + H2O = ADP + phosphate + H(+). Its function is as follows. The RuvA-RuvB-RuvC complex processes Holliday junction (HJ) DNA during genetic recombination and DNA repair, while the RuvA-RuvB complex plays an important role in the rescue of blocked DNA replication forks via replication fork reversal (RFR). RuvA specifically binds to HJ cruciform DNA, conferring on it an open structure. The RuvB hexamer acts as an ATP-dependent pump, pulling dsDNA into and through the RuvAB complex. RuvB forms 2 homohexamers on either side of HJ DNA bound by 1 or 2 RuvA tetramers; 4 subunits per hexamer contact DNA at a time. Coordinated motions by a converter formed by DNA-disengaged RuvB subunits stimulates ATP hydrolysis and nucleotide exchange. Immobilization of the converter enables RuvB to convert the ATP-contained energy into a lever motion, pulling 2 nucleotides of DNA out of the RuvA tetramer per ATP hydrolyzed, thus driving DNA branch migration. The RuvB motors rotate together with the DNA substrate, which together with the progressing nucleotide cycle form the mechanistic basis for DNA recombination by continuous HJ branch migration. Branch migration allows RuvC to scan DNA until it finds its consensus sequence, where it cleaves and resolves cruciform DNA. In Burkholderia thailandensis (strain ATCC 700388 / DSM 13276 / CCUG 48851 / CIP 106301 / E264), this protein is Holliday junction branch migration complex subunit RuvB.